The chain runs to 734 residues: Photosystem I P700 chlorophyll a apoprotein A2 (734 aa).

Transmembrane regions (helical) follow at residues 46–69 (IFAS…FHVA), 135–158 (LYSG…LHLQ), 175–199 (LNHH…HVAI), 273–291 (MAHH…GHMY), 330–353 (LHIQ…QHMY), 369–395 (ASLY…IFFV), 417–439 (AIIS…LYVH), and 517–535 (FLVH…LILV). Residues C559 and C568 each contribute to the [4Fe-4S] cluster site. 2 consecutive transmembrane segments (helical) span residues 575–596 (AFYL…YWHW) and 643–665 (LSVW…MFLI). H654, M662, and Y670 together coordinate chlorophyll a. Residue W671 coordinates phylloquinone. The chain crosses the membrane as a helical span at residues 707–727 (LVGLAHFSVGYVLTYAAFVLA).

It belongs to the PsaA/PsaB family. In terms of assembly, the PsaA/B heterodimer binds the P700 chlorophyll special pair and subsequent electron acceptors. PSI consists of a core antenna complex that captures photons, and an electron transfer chain that converts photonic excitation into a charge separation. The eukaryotic PSI reaction center is composed of at least 11 subunits. It depends on P700 is a chlorophyll a/chlorophyll a' dimer, A0 is one or more chlorophyll a, A1 is one or both phylloquinones and FX is a shared 4Fe-4S iron-sulfur center. as a cofactor.

It localises to the plastid. It is found in the chloroplast thylakoid membrane. It carries out the reaction reduced [plastocyanin] + hnu + oxidized [2Fe-2S]-[ferredoxin] = oxidized [plastocyanin] + reduced [2Fe-2S]-[ferredoxin]. In terms of biological role, psaA and PsaB bind P700, the primary electron donor of photosystem I (PSI), as well as the electron acceptors A0, A1 and FX. PSI is a plastocyanin/cytochrome c6-ferredoxin oxidoreductase, converting photonic excitation into a charge separation, which transfers an electron from the donor P700 chlorophyll pair to the spectroscopically characterized acceptors A0, A1, FX, FA and FB in turn. Oxidized P700 is reduced on the lumenal side of the thylakoid membrane by plastocyanin or cytochrome c6. This chain is Photosystem I P700 chlorophyll a apoprotein A2, found in Pyropia yezoensis (Susabi-nori).